A 243-amino-acid polypeptide reads, in one-letter code: Probable transcriptional regulatory protein BAV2207 (243 aa).

The disordered stretch occupies residues 1-21 (MAGHSKWANIQHRKGRQDAKR).

The protein belongs to the TACO1 family.

Its subcellular location is the cytoplasm. This Bordetella avium (strain 197N) protein is Probable transcriptional regulatory protein BAV2207.